The following is a 280-amino-acid chain: uncharacterized protein (280 aa).

The HTH rpiR-type domain maps to 1–78; that stretch reads MDVIQRIKEK…VLLAQSISRA (78 aa). Positions 37-57 form a DNA-binding region, H-T-H motif; that stretch reads ISDLSEKAGVKSEASVVKFYK. The 141-residue stretch at 123–263 folds into the SIS domain; it reads TVDLFKNAQR…YTLLAARDPR (141 aa).

This is an uncharacterized protein from Thermotoga maritima (strain ATCC 43589 / DSM 3109 / JCM 10099 / NBRC 100826 / MSB8).